Here is a 271-residue protein sequence, read N- to C-terminus: uncharacterized protein (271 aa).

The tract at residues 233 to 261 (VEPDPNRFSEPVDQPTLVEEGKEARRTER) is disordered. The span at 251 to 261 (EEGKEARRTER) shows a compositional bias: basic and acidic residues.

In terms of biological role, may be involved in swimming motility. This is an uncharacterized protein from Haloferax volcanii (strain ATCC 29605 / DSM 3757 / JCM 8879 / NBRC 14742 / NCIMB 2012 / VKM B-1768 / DS2) (Halobacterium volcanii).